A 183-amino-acid polypeptide reads, in one-letter code: ATP synthase subunit delta (183 aa).

This sequence belongs to the ATPase delta chain family. In terms of assembly, F-type ATPases have 2 components, F(1) - the catalytic core - and F(0) - the membrane proton channel. F(1) has five subunits: alpha(3), beta(3), gamma(1), delta(1), epsilon(1). F(0) has three main subunits: a(1), b(2) and c(10-14). The alpha and beta chains form an alternating ring which encloses part of the gamma chain. F(1) is attached to F(0) by a central stalk formed by the gamma and epsilon chains, while a peripheral stalk is formed by the delta and b chains.

Its subcellular location is the cell membrane. In terms of biological role, f(1)F(0) ATP synthase produces ATP from ADP in the presence of a proton or sodium gradient. F-type ATPases consist of two structural domains, F(1) containing the extramembraneous catalytic core and F(0) containing the membrane proton channel, linked together by a central stalk and a peripheral stalk. During catalysis, ATP synthesis in the catalytic domain of F(1) is coupled via a rotary mechanism of the central stalk subunits to proton translocation. This protein is part of the stalk that links CF(0) to CF(1). It either transmits conformational changes from CF(0) to CF(1) or is implicated in proton conduction. The sequence is that of ATP synthase subunit delta from Mycoplasmopsis synoviae (strain 53) (Mycoplasma synoviae).